Here is a 71-residue protein sequence, read N- to C-terminus: Large ribosomal subunit protein uL29 (71 aa).

Belongs to the universal ribosomal protein uL29 family.

The sequence is that of Large ribosomal subunit protein uL29 from Synechococcus sp. (strain RCC307).